Here is a 250-residue protein sequence, read N- to C-terminus: 1-(5-phosphoribosyl)-5-[(5-phosphoribosylamino)methylideneamino] imidazole-4-carboxamide isomerase (250 aa).

Asp8 (proton acceptor) is an active-site residue. Asp129 serves as the catalytic Proton donor.

This sequence belongs to the HisA/HisF family.

It localises to the cytoplasm. The enzyme catalyses 1-(5-phospho-beta-D-ribosyl)-5-[(5-phospho-beta-D-ribosylamino)methylideneamino]imidazole-4-carboxamide = 5-[(5-phospho-1-deoxy-D-ribulos-1-ylimino)methylamino]-1-(5-phospho-beta-D-ribosyl)imidazole-4-carboxamide. It participates in amino-acid biosynthesis; L-histidine biosynthesis; L-histidine from 5-phospho-alpha-D-ribose 1-diphosphate: step 4/9. In Desulfatibacillum aliphaticivorans, this protein is 1-(5-phosphoribosyl)-5-[(5-phosphoribosylamino)methylideneamino] imidazole-4-carboxamide isomerase.